The following is a 316-amino-acid chain: Melanocyte-stimulating hormone receptor (316 aa).

Over 1–37 the chain is Extracellular; sequence MAVQGSQRRLLGSLNSTPTAIPQLGLAANQTGARCLE. An N-linked (GlcNAc...) asparagine glycan is attached at Asn-29. Residues 38–63 form a helical membrane-spanning segment; the sequence is VSIPDGLFLSLGLVSLVENVLVVATI. Residues 64–72 are Cytoplasmic-facing; sequence AKNRNLHSP. Residues 73-93 traverse the membrane as a helical segment; that stretch reads MYCFICCLALSDLLVSGSNVV. The Extracellular portion of the chain corresponds to 94 to 117; it reads DTLLLLLEAGALAARAAVLQQLDN. The helical transmembrane segment at 118-139 threads the bilayer; sequence VIDVITCSSMLSSLCFLGAIAV. Residues 140 to 162 are Cytoplasmic-facing; the sequence is DRYISIFYALRYRSIVTLPRARR. Residues 163-182 form a helical membrane-spanning segment; the sequence is AVAAIWVASVLFSTLFIAYY. Topologically, residues 183 to 190 are extracellular; sequence DHTAVLLC. A helical membrane pass occupies residues 191–210; the sequence is LVVFFLAMLVLMAVLYVHML. Residues 211–239 lie on the Cytoplasmic side of the membrane; the sequence is ARACQHAQGIARLHKRQRPVHKGFGLKGP. Residues 240 to 265 traverse the membrane as a helical segment; the sequence is VTLTILLGIFFLCWGPFFLHLTLIVL. Residues 266 to 278 are Extracellular-facing; that stretch reads CPEHPTCGCIFKN. Residues 279 to 299 traverse the membrane as a helical segment; that stretch reads FNLFLALIICNAIIDPLIYAF. The Cytoplasmic segment spans residues 300 to 316; it reads HSQELRRTLKEVLTCSW. Cys-314 carries S-palmitoyl cysteine lipidation.

It belongs to the G-protein coupled receptor 1 family. As to quaternary structure, interacts with MGRN1, but does not undergo MGRN1-mediated ubiquitination; this interaction competes with GNAS-binding and thus inhibits agonist-induced cAMP production. Interacts with OPN3; the interaction results in a decrease in MC1R-mediated cAMP signaling and ultimately a decrease in melanin production in melanocytes.

It localises to the cell membrane. Receptor for MSH (alpha, beta and gamma) and ACTH. The activity of this receptor is mediated by G proteins which activate adenylate cyclase. Mediates melanogenesis, the production of eumelanin (black/brown) and phaeomelanin (red/yellow), via regulation of cAMP signaling in melanocytes. The sequence is that of Melanocyte-stimulating hormone receptor (MC1R) from Gorilla gorilla gorilla (Western lowland gorilla).